A 508-amino-acid chain; its full sequence is Probable protein kinase UbiB (508 aa).

Residues 118–494 (DFDLKPVASA…QKRQNFLLLL (377 aa)) enclose the Protein kinase domain. ATP-binding positions include 124 to 132 (VASASVAQV) and Lys151. The active-site Proton acceptor is Asp286. The helical transmembrane segment at 488 to 508 (QNFLLLLIAILLAALLAKSLL) threads the bilayer.

This sequence belongs to the ABC1 family. UbiB subfamily.

It is found in the cell inner membrane. The protein operates within cofactor biosynthesis; ubiquinone biosynthesis [regulation]. Is probably a protein kinase regulator of UbiI activity which is involved in aerobic coenzyme Q (ubiquinone) biosynthesis. The sequence is that of Probable protein kinase UbiB from Chromobacterium violaceum (strain ATCC 12472 / DSM 30191 / JCM 1249 / CCUG 213 / NBRC 12614 / NCIMB 9131 / NCTC 9757 / MK).